We begin with the raw amino-acid sequence, 364 residues long: Caffeic acid 3-O-methyltransferase 2 (364 aa).

129-135 (MNQDKVL) is a binding site for substrate. Positions 161-179 (AFEYHGTDPRFNKVFNKGM) are substrate binding. Gly207, Asp230, Asp250, Met251, and Lys264 together coordinate S-adenosyl-L-methionine. The Proton acceptor role is filled by His268.

This sequence belongs to the class I-like SAM-binding methyltransferase superfamily. Cation-independent O-methyltransferase family. COMT subfamily. Homodimer.

The catalysed reaction is (E)-caffeate + S-adenosyl-L-methionine = (E)-ferulate + S-adenosyl-L-homocysteine + H(+). Its pathway is aromatic compound metabolism; phenylpropanoid biosynthesis. In terms of biological role, catalyzes the conversion of caffeic acid to ferulic acid and of 5-hydroxyferulic acid to sinapic acid. The resulting products may subsequently be converted to the corresponding alcohols that are incorporated into lignins. The chain is Caffeic acid 3-O-methyltransferase 2 (OMT2) from Populus tremuloides (Quaking aspen).